The following is a 1509-amino-acid chain: Putative endo-alpha-N-acetylgalactosaminidase (1509 aa).

A signal peptide spans 1 to 41; sequence MPFRGRRRQSALRGLSLAATFCLAAGSSGISGALFATPAQA. Residues aspartate 288, asparagine 290, aspartate 292, lysine 294, and aspartate 299 each coordinate Ca(2+). Residues 313–585 are catalytic; sequence GGDDVKNRVV…NLPVKFLQQQ (273 aa). Residue aspartate 369 participates in substrate binding. Aspartate 472 acts as the Nucleophile in catalysis. Glutamate 498 functions as the Proton donor/acceptor in the catalytic mechanism. Ca(2+)-binding residues include asparagine 878, glutamate 880, aspartate 926, and tyrosine 929. 2 disordered regions span residues 1176-1197 and 1403-1439; these read NGWG…DGPP and IKAA…SGGG. Positions 1407-1428 are enriched in low complexity; it reads NPNPGTGSNPGTGSNPGTDPGT. Gly residues predominate over residues 1429–1439; sequence GSAGGNSSGGG. The LPXTG sorting signal signature appears at 1475 to 1479; sequence LAETG. Threonine 1478 carries the pentaglycyl murein peptidoglycan amidated threonine modification. Residues 1479–1509 constitute a propeptide, removed by sortase; that stretch reads GFSGLVLPLGIGLMLLLIGAAAIIVRRHRHS.

The protein belongs to the glycosyl hydrolase 101 family. A subfamily.

It localises to the secreted. The protein resides in the cell wall. The enzyme catalyses a 3-O-[beta-D-galactosyl-(1-&gt;3)-N-acetyl-alpha-D-galactosaminyl]-L-threonyl-[protein] + H2O = beta-D-galactosyl-(1-&gt;3)-N-acetyl-D-galactosamine + L-threonyl-[protein]. It catalyses the reaction a 3-O-[beta-D-galactosyl-(1-&gt;3)-N-acetyl-alpha-D-galactosaminyl]-L-seryl-[protein] + H2O = beta-D-galactosyl-(1-&gt;3)-N-acetyl-D-galactosamine + L-seryl-[protein]. Functionally, probably involved in the breakdown of mucin-type O-linked glycans. Specifically removes the T-antigen disaccharide (Gal-beta-1,3-GalNAc-alpha) from extracellular host glycoproteins. The polypeptide is Putative endo-alpha-N-acetylgalactosaminidase (Renibacterium salmoninarum (strain ATCC 33209 / DSM 20767 / JCM 11484 / NBRC 15589 / NCIMB 2235)).